A 215-amino-acid chain; its full sequence is MVLRSEILTKKSELPTPDQALPGRESAMPVPEAHFVNGRPLTAPFPAGLQQVLFGMGCFWGAERRLWQQPGVWVTAVGYAGGYTPNPTYDEVCSGLTGHSEVVLVVYNPQETSFEQLLKVFWEAHDPTQGMRQGGDIGTQYRSVIYTFDAAQKAAAMASRENFQAELAKAGYDRITTEIADVPPFYYAEAYHQQYLAKNPNGYCGLGGTGVCLPA.

C58 is a catalytic residue.

It belongs to the MsrA Met sulfoxide reductase family.

It catalyses the reaction L-methionyl-[protein] + [thioredoxin]-disulfide + H2O = L-methionyl-(S)-S-oxide-[protein] + [thioredoxin]-dithiol. It carries out the reaction [thioredoxin]-disulfide + L-methionine + H2O = L-methionine (S)-S-oxide + [thioredoxin]-dithiol. Its function is as follows. Has an important function as a repair enzyme for proteins that have been inactivated by oxidation. Catalyzes the reversible oxidation-reduction of methionine sulfoxide in proteins to methionine. The protein is Peptide methionine sulfoxide reductase MsrA of Pseudomonas aeruginosa (strain UCBPP-PA14).